The sequence spans 683 residues: Translation initiation factor IF-2 (683 aa).

The tr-type G domain occupies 182–351; the sequence is KRPPVVTVMG…ILTAEMEELK (170 aa). The interval 191 to 198 is G1; that stretch reads GHVDHGKT. Position 191–198 (191–198) interacts with GTP; that stretch reads GHVDHGKT. The G2 stretch occupies residues 216 to 220; the sequence is GITQH. The segment at 237 to 240 is G3; the sequence is DTPG. Residues 237-241 and 291-294 contribute to the GTP site; these read DTPGH and NKID. The interval 291-294 is G4; the sequence is NKID. The interval 327-329 is G5; it reads SAH.

Belongs to the TRAFAC class translation factor GTPase superfamily. Classic translation factor GTPase family. IF-2 subfamily.

The protein localises to the cytoplasm. In terms of biological role, one of the essential components for the initiation of protein synthesis. Protects formylmethionyl-tRNA from spontaneous hydrolysis and promotes its binding to the 30S ribosomal subunits. Also involved in the hydrolysis of GTP during the formation of the 70S ribosomal complex. The chain is Translation initiation factor IF-2 from Clostridium novyi (strain NT).